An 843-amino-acid chain; its full sequence is Histone-lysine N-methyltransferase PRDM9 (843 aa).

The 64-residue stretch at 23–86 (KVKDEFKDIS…QRQAMKPQIN (64 aa)) folds into the KRAB-related domain. Disordered regions lie at residues 85-104 (INDS…VSPP) and 110-170 (VKHS…KKLK). Zn(2+) is bound by residues C205, C208, C216, and H219. The region spanning 244 to 358 (PGLRISPSGI…PGCELLVWYG (115 aa)) is the SET domain. S-adenosyl-L-methionine is bound by residues 256–258 (AGL), Y291, and 320–321 (NC). Residue 288 to 294 (NSGYSWL) participates in substrate binding. Y357 contacts substrate. Position 368 is an N6,N6,N6-trimethyllysine; alternate (K368). K368 bears the N6-methyllysine; alternate mark. N6-methyllysine occurs at positions 372 and 374. Residues 388–411 (HPCLLCSLAFSSQKFLTQHMEWNH) form a C2H2-type 1 zinc finger. Zn(2+)-binding residues include C390, C393, H406, and H411. The tract at residues 418 to 493 (GTSARINPKP…VEELRTGQTT (76 aa)) is disordered. The span at 436 to 454 (QEQHVDSQNKNDKASNEVK) shows a compositional bias: basic and acidic residues. The segment covering 462–472 (RISTTFPSTLK) has biased composition (polar residues). Over residues 473–488 (EQMRSEESKRTVEELR) the composition is skewed to basic and acidic residues. The segment at 513-531 (QCGQYFSDKSNVNEHQKTH) adopts a C2H2-type 2; degenerate zinc-finger fold. 11 consecutive C2H2-type zinc fingers follow at residues 537-559 (YVCR…QRTH), 565-587 (YVCR…QRTH), 593-615 (YVCR…QRTH), 621-643 (YVCR…QRTH), 649-671 (YVCR…QRTH), 677-699 (YVCR…QRTH), 705-727 (YVCR…QRTH), 733-755 (YVCR…QRTH), 761-783 (YVCR…QRTH), 789-811 (YVCR…QRTH), and 817-839 (YVCR…QRTH). Zn(2+) contacts are provided by C707, C710, H723, H727, C735, C738, H751, H755, C763, C766, H779, H783, C791, C794, H807, and H811. Positions 715–805 (TAKSNLIQHQ…RGFTQKSNLI (91 aa)) are DNA-binding.

This sequence belongs to the class V-like SAM-binding methyltransferase superfamily. Homodimer. Interacts with EHMT2 and CDYL; interaction only takes place when PRDM9 is bound to hotspot DNA. Interacts with CXXC1; this interaction does not link PRDM9-activated recombination hotspot sites with DSB machinery and is not required for the hotspot recognition pathway. Forms a complex with EWSR1, REC8, SYCP3 and SYCP1; complex formation is dependent of phosphorylated form of REC8 and requires PRDM9 bound to hotspot DNA; EWSR1 joins PRDM9 with the chromosomal axis through REC8. Mono-methylated; automethylated. Tri-methylated; automethylated. Mono-methylation is predominant; automethylation is lower and slower than H3 peptide methylation and is in a highest S-adenosyl-L-methionine concentration-dependent. There are two major sites for automethylation at Lys-368 and Lys-374. Lysines can be simultaneously methylated, such as Lys-368(me3)/Lys-372(me1), Lys-368(me1)/Lys-374(me1) and Lys-368(me1)/Lys-372(me1)/Lys-374(me1). Automethylation is an intramolecular (cis) process. Specifically expressed in germ cells entering meiotic prophase in female fetal gonads and in postnatal testis. Expressed in early meiotic prophase.

The protein resides in the nucleus. It localises to the chromosome. It carries out the reaction L-lysyl-[protein] + S-adenosyl-L-methionine = N(6)-methyl-L-lysyl-[protein] + S-adenosyl-L-homocysteine + H(+). The enzyme catalyses N(6),N(6)-dimethyl-L-lysyl-[protein] + S-adenosyl-L-methionine = N(6),N(6),N(6)-trimethyl-L-lysyl-[protein] + S-adenosyl-L-homocysteine + H(+). The catalysed reaction is L-lysyl(4)-[histone H3] + 3 S-adenosyl-L-methionine = N(6),N(6),N(6)-trimethyl-L-lysyl(4)-[histone H3] + 3 S-adenosyl-L-homocysteine + 3 H(+). It catalyses the reaction L-lysyl(36)-[histone H3] + 3 S-adenosyl-L-methionine = N(6),N(6),N(6)-trimethyl-L-lysyl(36)-[histone H3] + 3 S-adenosyl-L-homocysteine + 3 H(+). It carries out the reaction L-lysyl(9)-[histone H3] + 3 S-adenosyl-L-methionine = N(6),N(6),N(6)-trimethyl-L-lysyl(9)-[histone H3] + 3 S-adenosyl-L-homocysteine + 3 H(+). The enzyme catalyses L-lysyl(20)-[histone H4] + S-adenosyl-L-methionine = N(6)-methyl-L-lysyl(20)-[histone H4] + S-adenosyl-L-homocysteine + H(+). The catalysed reaction is N(6)-methyl-L-lysyl(20)-[histone H4] + S-adenosyl-L-methionine = N(6),N(6)-dimethyl-L-lysyl(20)-[histone H4] + S-adenosyl-L-homocysteine + H(+). Functionally, histone methyltransferase that sequentially mono-, di-, and tri-methylates both 'Lys-4' (H3K4) and 'Lys-36' (H3K36) of histone H3 to produce respectively trimethylated 'Lys-4' (H3K4me3) and trimethylated 'Lys-36' (H3K36me3) histone H3 and plays a key role in meiotic prophase by determining hotspot localization thereby promoting meiotic recombination. Can also methylate all four core histones with H3 being the best substrate and the most highly modified. Is also able, on one hand, to mono and di-methylate H4K20 and on other hand to trimethylate H3K9 with the di-methylated H3K9 as the best substrate. During meiotic prophase, binds specific DNA sequences through its zinc finger domains thereby determining hotspot localization where it promotes local H3K4me3 and H3K36me3 enrichment on the same nucleosomes through its histone methyltransferase activity. Thereby promotes double-stranded breaks (DSB) formation, at this subset of PRDM9-binding sites, that initiates meiotic recombination for the proper meiotic progression. During meiotic progression hotspot-bound PRDM9 interacts with several complexes; in early leptonema binds CDYL and EHMT2 followed by EWSR1 and CXXC1 by the end of leptonema. EWSR1 joins PRDM9 with the chromosomal axis through REC8. In this way, controls the DSB repair pathway, pairing of homologous chromosomes and sex body formation. Moreover plays a central role in the transcriptional activation of genes during early meiotic prophase thanks to H3K4me3 and H3K36me3 enrichment that represents a specific tag for epigenetic transcriptional activation. In addition performs automethylation. Acetylation and phosphorylation of histone H3 attenuate or prevent histone H3 methylation. The chain is Histone-lysine N-methyltransferase PRDM9 from Mus musculus (Mouse).